The primary structure comprises 262 residues: Protein CUSTOS (262 aa).

Disordered stretches follow at residues Met-1–Thr-79 and Phe-126–Asn-262. Over residues Ser-9–Ser-18 the composition is skewed to low complexity. The span at Ala-51–Ser-61 shows a compositional bias: polar residues. Phosphoserine is present on Ser-61. At Thr-79 the chain carries Phosphothreonine. Position 138 is a phosphoserine (Ser-138). Thr-182 is modified (phosphothreonine). The span at Lys-188 to Lys-199 shows a compositional bias: basic residues. Low complexity predominate over residues Val-200–Ala-209. Positions Thr-210–Gln-221 are enriched in polar residues. The residue at position 211 (Thr-211) is a Phosphothreonine. The Nucleolar localization signal (NLS) motif lies at Lys-236–Ala-241.

It belongs to the CUSTOS family.

It localises to the nucleus envelope. Plays a role in the regulation of Wnt signaling pathway during early development. The chain is Protein CUSTOS from Homo sapiens (Human).